A 31-amino-acid polypeptide reads, in one-letter code: Cytochrome b6-f complex subunit 6 (31 aa).

The chain crosses the membrane as a helical span at residues 4-24; the sequence is LLSYFAFLMLALTFTLALFVG.

Belongs to the PetL family. The 4 large subunits of the cytochrome b6-f complex are cytochrome b6, subunit IV (17 kDa polypeptide, PetD), cytochrome f and the Rieske protein, while the 4 small subunits are PetG, PetL, PetM and PetN. The complex functions as a dimer.

Its subcellular location is the plastid. It localises to the chloroplast thylakoid membrane. Functionally, component of the cytochrome b6-f complex, which mediates electron transfer between photosystem II (PSII) and photosystem I (PSI), cyclic electron flow around PSI, and state transitions. PetL is important for photoautotrophic growth as well as for electron transfer efficiency and stability of the cytochrome b6-f complex. The protein is Cytochrome b6-f complex subunit 6 of Adiantum capillus-veneris (Maidenhair fern).